Reading from the N-terminus, the 382-residue chain is S-adenosylmethionine synthase (382 aa).

Residue Glu10 coordinates Mg(2+). His16 is an ATP binding site. A K(+)-binding site is contributed by Glu44. The L-methionine site is built by Glu57 and Gln100. Residues 166–168 (DTK), 234–237 (SGRF), Asp245, 251–252 (RK), Ala268, Lys272, and Lys276 each bind ATP. Asp245 contributes to the L-methionine binding site. Position 276 (Lys276) interacts with L-methionine.

It belongs to the AdoMet synthase family. It depends on Mg(2+) as a cofactor. K(+) is required as a cofactor.

It carries out the reaction L-methionine + ATP + H2O = S-adenosyl-L-methionine + phosphate + diphosphate. It functions in the pathway amino-acid biosynthesis; S-adenosyl-L-methionine biosynthesis; S-adenosyl-L-methionine from L-methionine: step 1/1. Its function is as follows. Catalyzes the formation of S-adenosylmethionine from methionine and ATP. The reaction comprises two steps that are both catalyzed by the same enzyme: formation of S-adenosylmethionine (AdoMet) and triphosphate, and subsequent hydrolysis of the triphosphate. The polypeptide is S-adenosylmethionine synthase (sam1) (Schizosaccharomyces pombe (strain 972 / ATCC 24843) (Fission yeast)).